A 178-amino-acid chain; its full sequence is Non-specific lipid transfer protein-like 1 (178 aa).

An N-terminal signal peptide occupies residues 1–26 (MAVAARAAAVACLLVVGLAAVAGVDG). 2 disulfides stabilise this stretch: cysteine 50-cysteine 68 and cysteine 69-cysteine 110. Asparagine 99 carries an N-linked (GlcNAc...) asparagine glycan. Alanine 149 is lipidated: GPI-anchor amidated alanine. Residues 150 to 178 (AARSPMASTTAVLVVAAAVAAPLLAFFHF) constitute a propeptide, removed in mature form.

The protein belongs to the plant LTP family. In terms of processing, O-glycosylated on hydroxyprolines; noncontiguous hydroxylproline residues are glycosylated with arabinogalactan. Expressed in roots, stems, leaves, flowers and seeds.

The protein localises to the vacuole. Its subcellular location is the aleurone grain membrane. This is Non-specific lipid transfer protein-like 1 (LTPL1) from Oryza sativa subsp. japonica (Rice).